Reading from the N-terminus, the 391-residue chain is S-adenosylmethionine synthase (391 aa).

The segment at 1–20 (MPRSDYLFTSESVSEGHPDK) is disordered. His-17 serves as a coordination point for ATP. Asp-19 contacts Mg(2+). Residue Glu-45 participates in K(+) binding. L-methionine-binding residues include Glu-58 and Gln-102. Residues 102–112 (QSADIAQGVDA) form a flexible loop region. Residues 169–171 (DAK), 235–236 (KF), Asp-244, 250–251 (RK), Ala-267, and Lys-271 contribute to the ATP site. L-methionine is bound at residue Asp-244. Lys-275 serves as a coordination point for L-methionine.

Belongs to the AdoMet synthase family. Homotetramer; dimer of dimers. Mg(2+) is required as a cofactor. K(+) serves as cofactor.

It is found in the cytoplasm. The catalysed reaction is L-methionine + ATP + H2O = S-adenosyl-L-methionine + phosphate + diphosphate. The protein operates within amino-acid biosynthesis; S-adenosyl-L-methionine biosynthesis; S-adenosyl-L-methionine from L-methionine: step 1/1. Its function is as follows. Catalyzes the formation of S-adenosylmethionine (AdoMet) from methionine and ATP. The overall synthetic reaction is composed of two sequential steps, AdoMet formation and the subsequent tripolyphosphate hydrolysis which occurs prior to release of AdoMet from the enzyme. The sequence is that of S-adenosylmethionine synthase from Methylorubrum extorquens (strain CM4 / NCIMB 13688) (Methylobacterium extorquens).